The following is a 204-amino-acid chain: Holliday junction branch migration complex subunit RuvA (204 aa).

Positions 1-67 (MIGYLEGKIL…QPKPVLIGFN (67 aa)) are domain I. A domain II region spans residues 68-145 (SLEEREFFER…VFAGEHGGEP (78 aa)). Residues 146 to 156 (AGPAPVEENFH) are flexible linker. Residues 156–204 (HLLVLDVLVNQLGHKAAEAKELINQAIKRNPAISSPEELFDEVYRGETG) are domain III.

It belongs to the RuvA family. Homotetramer. Forms an RuvA(8)-RuvB(12)-Holliday junction (HJ) complex. HJ DNA is sandwiched between 2 RuvA tetramers; dsDNA enters through RuvA and exits via RuvB. An RuvB hexamer assembles on each DNA strand where it exits the tetramer. Each RuvB hexamer is contacted by two RuvA subunits (via domain III) on 2 adjacent RuvB subunits; this complex drives branch migration. In the full resolvosome a probable DNA-RuvA(4)-RuvB(12)-RuvC(2) complex forms which resolves the HJ.

The protein localises to the cytoplasm. In terms of biological role, the RuvA-RuvB-RuvC complex processes Holliday junction (HJ) DNA during genetic recombination and DNA repair, while the RuvA-RuvB complex plays an important role in the rescue of blocked DNA replication forks via replication fork reversal (RFR). RuvA specifically binds to HJ cruciform DNA, conferring on it an open structure. The RuvB hexamer acts as an ATP-dependent pump, pulling dsDNA into and through the RuvAB complex. HJ branch migration allows RuvC to scan DNA until it finds its consensus sequence, where it cleaves and resolves the cruciform DNA. In Desulfatibacillum aliphaticivorans, this protein is Holliday junction branch migration complex subunit RuvA.